The following is a 538-amino-acid chain: uncharacterized protein (538 aa).

An N-terminal signal peptide occupies residues 1 to 17 (MSFSATILFSPPSGSEA). Positions 101–131 (RQGKVSIPDEDGESRAHSSPPEEPGPLKESP) are disordered. Residues Lys128 and Lys221 each participate in a glycyl lysine isopeptide (Lys-Gly) (interchain with G-Cter in SUMO2) cross-link. Position 224 is a phosphoserine (Ser224). Positions 233–253 (RATPETGPENGTKLPPPRPED) are disordered. A phosphoserine mark is found at Ser285 and Ser428. The segment at 488 to 523 (LPPELYNPNFQEEEDEGGDENAPGSPSFDQPHKTCC) is disordered.

Its subcellular location is the secreted. This is an uncharacterized protein from Homo sapiens (Human).